Here is a 181-residue protein sequence, read N- to C-terminus: MGLYVSRLFNRLFQKKDVRILMVGLDAAGKTTILYKVKLGEVVTTIPTIGFNVETVEFRNISFTVWDVGGQDKIRPLWRHYYSNTDGLIFVVDSNDRERIDDAREGLHRMINEEELKDAIILVFANKQDLPNAMSAAEVTEKLHLNTIRERNWFIQSTCATRGDGLYEGFDWLTTHLNNAK.

The N-myristoyl glycine moiety is linked to residue glycine 2. Residues 24 to 31 (GLDAAGKT), 126 to 129 (NKQD), and alanine 160 contribute to the GTP site.

The protein belongs to the small GTPase superfamily. Arf family. As to quaternary structure, may interact with GTPase RAB5b.

The protein localises to the golgi apparatus membrane. The catalysed reaction is GTP + H2O = GDP + phosphate + H(+). Its activity is regulated as follows. Alternates between an inactive GDP-bound form and an active GTP-bound form. Intrinsic GTPase activity is almost undetectable in vitro. Activated by a guanine nucleotide-exchange factor (GEF) and inactivated by GTPase-activating protein ARFGAP1. In terms of biological role, small GTPase involved in protein trafficking between different compartments. Modulates vesicle budding and uncoating within the Golgi complex. In its GTP-bound form, triggers the recruitment of coatomer proteins to the Golgi membrane. The hydrolysis of ARF1-bound GTP, which is mediated by ARFGAPs proteins, is required for dissociation of coat proteins from Golgi membranes and vesicles. Regulates the transport of N-acylated AK2 to the parasitophorous vacuole membrane. May be involved in the activation of lipid kinase PIP5K. The sequence is that of ADP-ribosylation factor 1 (ARF1) from Plasmodium falciparum (isolate NF54).